A 29-amino-acid polypeptide reads, in one-letter code: Glucagon (29 aa).

This sequence belongs to the glucagon family.

It is found in the secreted. Functionally, glucagon plays a key role in glucose metabolism and homeostasis. Regulates blood glucose by increasing gluconeogenesis and decreasing glycolysis. The protein is Glucagon (GCG) of Meleagris gallopavo (Wild turkey).